The chain runs to 204 residues: Probable UMP-CMP kinase 1 (204 aa).

ATP is bound at residue 31 to 36; that stretch reads GSGKGT. Residues 51–80 form an NMP region; it reads SAGDLLRAEIKSGSEFGAMIQSMIAEGRIV. A ribonucleoside 5'-phosphate is bound by residues arginine 57, 78 to 80, and 105 to 108; these read RIV and GFPR. Asparagine 112 contacts CMP. An LID region spans residues 143-151; the sequence is SRNQGREDD. Arginine 144 lines the ATP pocket. Residues arginine 148 and arginine 159 each coordinate a ribonucleoside 5'-phosphate. Residue lysine 187 coordinates ATP.

It belongs to the adenylate kinase family. UMP-CMP kinase subfamily. As to quaternary structure, monomer. Requires Mg(2+) as cofactor.

It localises to the cytoplasm. It is found in the nucleus. The enzyme catalyses CMP + ATP = CDP + ADP. It catalyses the reaction dCMP + ATP = dCDP + ADP. The catalysed reaction is UMP + ATP = UDP + ADP. Catalyzes the phosphorylation of pyrimidine nucleoside monophosphates at the expense of ATP. Plays an important role in de novo pyrimidine nucleotide biosynthesis. Has preference for UMP and CMP as phosphate acceptors. This chain is Probable UMP-CMP kinase 1 (UMK1), found in Arabidopsis thaliana (Mouse-ear cress).